The chain runs to 158 residues: NAD(P)H-quinone oxidoreductase subunit J, chloroplastic (158 aa).

This sequence belongs to the complex I 30 kDa subunit family. NDH is composed of at least 16 different subunits, 5 of which are encoded in the nucleus.

The protein resides in the plastid. Its subcellular location is the chloroplast thylakoid membrane. It carries out the reaction a plastoquinone + NADH + (n+1) H(+)(in) = a plastoquinol + NAD(+) + n H(+)(out). The catalysed reaction is a plastoquinone + NADPH + (n+1) H(+)(in) = a plastoquinol + NADP(+) + n H(+)(out). Its function is as follows. NDH shuttles electrons from NAD(P)H:plastoquinone, via FMN and iron-sulfur (Fe-S) centers, to quinones in the photosynthetic chain and possibly in a chloroplast respiratory chain. The immediate electron acceptor for the enzyme in this species is believed to be plastoquinone. Couples the redox reaction to proton translocation, and thus conserves the redox energy in a proton gradient. The polypeptide is NAD(P)H-quinone oxidoreductase subunit J, chloroplastic (Drimys granadensis).